We begin with the raw amino-acid sequence, 258 residues long: NAD kinase (258 aa).

The active-site Proton acceptor is Asp-51. NAD(+)-binding positions include 51-52 (DG), 119-120 (ND), Lys-130, Asp-149, 160-165 (TAYSLS), and Ala-184.

It belongs to the NAD kinase family. In terms of assembly, homodimer. The cofactor is a divalent metal cation.

The protein localises to the cytoplasm. The enzyme catalyses NAD(+) + ATP = ADP + NADP(+) + H(+). Its function is as follows. Involved in the regulation of the intracellular balance between NAD(H) and NADP(H), and is a key enzyme in the biosynthesis of NADP. Catalyzes specifically the phosphorylation on 2'-hydroxyl of the adenosine moiety of NAD to yield NADP. The polypeptide is NAD kinase (NADK) (Thermotoga maritima (strain ATCC 43589 / DSM 3109 / JCM 10099 / NBRC 100826 / MSB8)).